We begin with the raw amino-acid sequence, 74 residues long: Translation initiation factor IF-1 (74 aa).

One can recognise an S1-like domain in the interval 1–72; that stretch reads MSKEDAIEVE…NKGRITYRLK (72 aa).

This sequence belongs to the IF-1 family. As to quaternary structure, component of the 30S ribosomal translation pre-initiation complex which assembles on the 30S ribosome in the order IF-2 and IF-3, IF-1 and N-formylmethionyl-tRNA(fMet); mRNA recruitment can occur at any time during PIC assembly.

It localises to the cytoplasm. One of the essential components for the initiation of protein synthesis. Stabilizes the binding of IF-2 and IF-3 on the 30S subunit to which N-formylmethionyl-tRNA(fMet) subsequently binds. Helps modulate mRNA selection, yielding the 30S pre-initiation complex (PIC). Upon addition of the 50S ribosomal subunit IF-1, IF-2 and IF-3 are released leaving the mature 70S translation initiation complex. The polypeptide is Translation initiation factor IF-1 (Synechococcus sp. (strain JA-3-3Ab) (Cyanobacteria bacterium Yellowstone A-Prime)).